Consider the following 137-residue polypeptide: Small ribosomal subunit protein uS12 (137 aa).

A disordered region spans residues 1–26; that stretch reads MPTINQLVRKPRQSKIKKSTSPALNK. A compositionally biased stretch (basic residues) spans 9 to 18; that stretch reads RKPRQSKIKK.

It belongs to the universal ribosomal protein uS12 family. As to quaternary structure, part of the 30S ribosomal subunit. Contacts proteins S8 and S17. May interact with IF1 in the 30S initiation complex.

Functionally, with S4 and S5 plays an important role in translational accuracy. Its function is as follows. Interacts with and stabilizes bases of the 16S rRNA that are involved in tRNA selection in the A site and with the mRNA backbone. Located at the interface of the 30S and 50S subunits, it traverses the body of the 30S subunit contacting proteins on the other side and probably holding the rRNA structure together. The combined cluster of proteins S8, S12 and S17 appears to hold together the shoulder and platform of the 30S subunit. This Listeria innocua serovar 6a (strain ATCC BAA-680 / CLIP 11262) protein is Small ribosomal subunit protein uS12.